The chain runs to 235 residues: Phosphoribosylaminoimidazole-succinocarboxamide synthase (235 aa).

It belongs to the SAICAR synthetase family.

The catalysed reaction is 5-amino-1-(5-phospho-D-ribosyl)imidazole-4-carboxylate + L-aspartate + ATP = (2S)-2-[5-amino-1-(5-phospho-beta-D-ribosyl)imidazole-4-carboxamido]succinate + ADP + phosphate + 2 H(+). It participates in purine metabolism; IMP biosynthesis via de novo pathway; 5-amino-1-(5-phospho-D-ribosyl)imidazole-4-carboxamide from 5-amino-1-(5-phospho-D-ribosyl)imidazole-4-carboxylate: step 1/2. In Streptococcus pneumoniae serotype 19F (strain G54), this protein is Phosphoribosylaminoimidazole-succinocarboxamide synthase.